The chain runs to 262 residues: Phosphatase SCO2771 (262 aa).

In terms of biological role, displays phosphatase activity against p-nitrophenyl phosphate (pNPP) in vitro; however, the physiological substrate is unknown. The polypeptide is Phosphatase SCO2771 (Streptomyces coelicolor (strain ATCC BAA-471 / A3(2) / M145)).